A 467-amino-acid chain; its full sequence is Glutamine synthetase (467 aa).

In terms of domain architecture, GS beta-grasp spans Glu14–Thr98. The region spanning Pro106 to Cys467 is the GS catalytic domain. Residues Glu131 and Glu133 each coordinate Mg(2+). Asp209 is an ATP binding site. Mg(2+)-binding residues include Glu214 and Glu221. Residues Asn265 to Gly266 and Gly266 contribute to the L-glutamate site. Position 270 (His270) interacts with Mg(2+). Residues Asn272–Ser274 and Ser274 each bind ATP. Positions 320, 326, and 338 each coordinate L-glutamate. Positions 338 and 343 each coordinate ATP. Glu356 serves as a coordination point for Mg(2+). An L-glutamate-binding site is contributed by Arg358. Tyr396 carries the O-AMP-tyrosine modification.

It belongs to the glutamine synthetase family. Oligomer of 12 subunits arranged in the form of two hexameric ring. Requires Mg(2+) as cofactor.

The protein localises to the cytoplasm. It carries out the reaction L-glutamate + NH4(+) + ATP = L-glutamine + ADP + phosphate + H(+). The activity of this enzyme could be controlled by adenylation under conditions of abundant glutamine. In terms of biological role, catalyzes the ATP-dependent biosynthesis of glutamine from glutamate and ammonia. This chain is Glutamine synthetase, found in Cereibacter sphaeroides (Rhodobacter sphaeroides).